Reading from the N-terminus, the 77-residue chain is Translation initiation factor IF-1, chloroplastic (77 aa).

Positions 1 to 71 (MKEQKWIHEG…SRGRIIYRLR (71 aa)) constitute an S1-like domain.

This sequence belongs to the IF-1 family. Component of the 30S ribosomal translation pre-initiation complex which assembles on the 30S ribosome in the order IF-2 and IF-3, IF-1 and N-formylmethionyl-tRNA(fMet); mRNA recruitment can occur at any time during PIC assembly.

It is found in the plastid. The protein resides in the chloroplast. Its function is as follows. One of the essential components for the initiation of protein synthesis. Stabilizes the binding of IF-2 and IF-3 on the 30S subunit to which N-formylmethionyl-tRNA(fMet) subsequently binds. Helps modulate mRNA selection, yielding the 30S pre-initiation complex (PIC). Upon addition of the 50S ribosomal subunit IF-1, IF-2 and IF-3 are released leaving the mature 70S translation initiation complex. The sequence is that of Translation initiation factor IF-1, chloroplastic from Buxus microphylla (Littleleaf boxwood).